A 253-amino-acid chain; its full sequence is Pimeloyl-[acyl-carrier protein] methyl ester esterase (253 aa).

Substrate contacts are provided by residues Trp18, 78-79 (SL), and 139-143 (FLALD). The active-site Nucleophile is the Ser78. Active-site residues include Asp203 and His231. His231 lines the substrate pocket.

Belongs to the AB hydrolase superfamily. Carboxylesterase BioH family. Monomer.

It is found in the cytoplasm. It catalyses the reaction 6-carboxyhexanoyl-[ACP] methyl ester + H2O = 6-carboxyhexanoyl-[ACP] + methanol + H(+). The protein operates within cofactor biosynthesis; biotin biosynthesis. Functionally, the physiological role of BioH is to remove the methyl group introduced by BioC when the pimeloyl moiety is complete. It allows to synthesize pimeloyl-ACP via the fatty acid synthetic pathway through the hydrolysis of the ester bonds of pimeloyl-ACP esters. This is Pimeloyl-[acyl-carrier protein] methyl ester esterase from Xanthomonas axonopodis pv. citri (strain 306).